Here is a 362-residue protein sequence, read N- to C-terminus: 3-isopropylmalate dehydrogenase (362 aa).

75–88 (GPKWANLPPTEQPE) contacts NAD(+). The substrate site is built by R96, R106, R135, and D224. Residues D224, D248, and D252 each contribute to the Mg(2+) site. 282 to 294 (GSAPDIAGLGVAN) serves as a coordination point for NAD(+).

Belongs to the isocitrate and isopropylmalate dehydrogenases family. LeuB type 1 subfamily. As to quaternary structure, homodimer. It depends on Mg(2+) as a cofactor. Requires Mn(2+) as cofactor.

Its subcellular location is the cytoplasm. It carries out the reaction (2R,3S)-3-isopropylmalate + NAD(+) = 4-methyl-2-oxopentanoate + CO2 + NADH. It functions in the pathway amino-acid biosynthesis; L-leucine biosynthesis; L-leucine from 3-methyl-2-oxobutanoate: step 3/4. Catalyzes the oxidation of 3-carboxy-2-hydroxy-4-methylpentanoate (3-isopropylmalate) to 3-carboxy-4-methyl-2-oxopentanoate. The product decarboxylates to 4-methyl-2 oxopentanoate. This Colwellia psychrerythraea (strain 34H / ATCC BAA-681) (Vibrio psychroerythus) protein is 3-isopropylmalate dehydrogenase.